The chain runs to 162 residues: uncharacterized protein (162 aa).

The region spanning 6 to 78 is the HTH asnC-type domain; sequence LDDLDRNILR…ALIVLEVGKP (73 aa). The segment at residues 25 to 44 is a DNA-binding region (H-T-H motif); the sequence is ISELSEQLKKPESTIHFRIK.

This is an uncharacterized protein from Pyrococcus furiosus (strain ATCC 43587 / DSM 3638 / JCM 8422 / Vc1).